The primary structure comprises 277 residues: Large ribosomal subunit protein uL2 (277 aa).

The interval arginine 216–glycine 277 is disordered.

This sequence belongs to the universal ribosomal protein uL2 family. Part of the 50S ribosomal subunit. Forms a bridge to the 30S subunit in the 70S ribosome.

Functionally, one of the primary rRNA binding proteins. Required for association of the 30S and 50S subunits to form the 70S ribosome, for tRNA binding and peptide bond formation. It has been suggested to have peptidyltransferase activity; this is somewhat controversial. Makes several contacts with the 16S rRNA in the 70S ribosome. The polypeptide is Large ribosomal subunit protein uL2 (Acidiphilium cryptum (strain JF-5)).